A 351-amino-acid polypeptide reads, in one-letter code: Rhodopsin (351 aa).

Residues 1-36 (MNGTEGQDFYVPMSNKTGVVRSPFEYPQYYLAEPWK) lie on the Extracellular side of the membrane. Asn-2 and Asn-15 each carry an N-linked (GlcNAc...) asparagine glycan. A helical transmembrane segment spans residues 37–61 (FSALAAYMFMLILLGFPVNFLTLYV). The Cytoplasmic segment spans residues 62–73 (TIQHKKLRTPLN). The chain crosses the membrane as a helical span at residues 74–96 (YILLNLVVADLFMVFGGFTTTMY). Over 97–110 (TSMNGYFVFGVTGC) the chain is Extracellular. Cysteines 110 and 187 form a disulfide. Residues 111–133 (YIEGFFATLGGEIALWSLVVLAV) traverse the membrane as a helical segment. The 'Ionic lock' involved in activated form stabilization motif lies at 134–136 (ERY). Topologically, residues 134 to 152 (ERYVVVCKPMSNFRFGENH) are cytoplasmic. The helical transmembrane segment at 153 to 173 (AIMGVAFSWIMAMACAAPPLF) threads the bilayer. The Extracellular segment spans residues 174–202 (GWSRYIPEGMQCSCGIDYYTLKPEINNES). Residues 203–224 (FVIYMFVVHFMIPLAVIFFCYG) traverse the membrane as a helical segment. The Cytoplasmic portion of the chain corresponds to 225-252 (NLVCTVKEAAAQQQESATTQKAEKEVTR). Residues 253–274 (MVIIMVIAFLICWVPYASVAFY) traverse the membrane as a helical segment. Residues 275–286 (IFTNQGSDFGPI) lie on the Extracellular side of the membrane. Residues 287–308 (FMTIPAFFAKSSAIYNPVIYIV) traverse the membrane as a helical segment. Lys-296 carries the N6-(retinylidene)lysine modification. The Cytoplasmic portion of the chain corresponds to 309–351 (MNKQFRNCMITTLCCGKNPLGDEDTSAGKTETSSVSTSQVSPA). S-palmitoyl cysteine attachment occurs at residues Cys-322 and Cys-323. Residues 331–351 (EDTSAGKTETSSVSTSQVSPA) form a disordered region. A compositionally biased stretch (low complexity) spans 340-351 (TSSVSTSQVSPA). Phosphoserine; by RK and GRK7 is present on Ser-341.

The protein belongs to the G-protein coupled receptor 1 family. Opsin subfamily. Post-translationally, contains one covalently linked retinal chromophore. Upon light absorption, the covalently bound 11-cis-retinal is converted to all-trans-retinal. After hydrolysis of the Schiff base and release of the covalently bound all-trans-retinal, active rhodopsin is regenerated by binding of a fresh molecule of 11-cis-retinal.

It localises to the membrane. It is found in the cell projection. Its subcellular location is the cilium. The protein localises to the photoreceptor outer segment. In terms of biological role, photoreceptor required for image-forming vision at low light intensity. Required for photoreceptor cell viability after birth. Light-induced isomerization of 11-cis to all-trans retinal triggers a conformational change that activates signaling via G-proteins. Subsequent receptor phosphorylation mediates displacement of the bound G-protein alpha subunit by arrestin and terminates signaling. The protein is Rhodopsin (RHO) of Gallus gallus (Chicken).